A 77-amino-acid polypeptide reads, in one-letter code: RNA-binding protein Hfq (77 aa).

The Sm domain maps to D10–I70.

It belongs to the Hfq family. In terms of assembly, homohexamer.

Functionally, RNA chaperone that binds small regulatory RNA (sRNAs) and mRNAs to facilitate mRNA translational regulation in response to envelope stress, environmental stress and changes in metabolite concentrations. Also binds with high specificity to tRNAs. The sequence is that of RNA-binding protein Hfq from Cereibacter sphaeroides (strain ATCC 17029 / ATH 2.4.9) (Rhodobacter sphaeroides).